The chain runs to 307 residues: Nicotinamide/nicotinic acid mononucleotide adenylyltransferase 2 (307 aa).

2 residues coordinate NAD(+): S16 and F17. H24 is an ATP binding site. W92 and T95 together coordinate NAD(+). S-palmitoyl cysteine attachment occurs at residues C164 and C165. The NAD(+) site is built by G200, D202, L212, W213, and R232. 271 to 274 (TKSR) contacts ATP.

Belongs to the eukaryotic NMN adenylyltransferase family. As to quaternary structure, monomer. The cofactor is Mg(2+). In terms of processing, degraded in response to injured neurite. Degradation is caused by polyubiquitination by MYCBP2 after recognition by FBXO45. Palmitoylated; palmitoylation is required for membrane association.

It localises to the golgi apparatus membrane. Its subcellular location is the cytoplasmic vesicle membrane. The protein resides in the cytoplasm. The protein localises to the cell projection. It is found in the axon. The catalysed reaction is beta-nicotinamide D-ribonucleotide + ATP + H(+) = diphosphate + NAD(+). The enzyme catalyses nicotinate beta-D-ribonucleotide + ATP + H(+) = deamido-NAD(+) + diphosphate. The protein operates within cofactor biosynthesis; NAD(+) biosynthesis; NAD(+) from nicotinamide D-ribonucleotide: step 1/1. It participates in cofactor biosynthesis; NAD(+) biosynthesis; deamido-NAD(+) from nicotinate D-ribonucleotide: step 1/1. Inhibited by P1-(adenosine-5')-P3-(nicotinamide-riboside-5')-triphosphate (Np3AD) and P1-(adenosine-5')-P4-(nicotinamide-riboside-5')-tetraphosphate (Np4AD). Functionally, nicotinamide/nicotinate-nucleotide adenylyltransferase that acts as an axon maintenance factor. Axon survival factor required for the maintenance of healthy axons: acts by delaying Wallerian axon degeneration, an evolutionarily conserved process that drives the loss of damaged axons. Catalyzes the formation of NAD(+) from nicotinamide mononucleotide (NMN) and ATP. Can also use the deamidated form; nicotinic acid mononucleotide (NaMN) as substrate but with a lower efficiency. Cannot use triazofurin monophosphate (TrMP) as substrate. Also catalyzes the reverse reaction, i.e. the pyrophosphorolytic cleavage of NAD(+). For the pyrophosphorolytic activity prefers NAD(+), NADH and NaAD as substrates and degrades nicotinic acid adenine dinucleotide phosphate (NHD) less effectively. Fails to cleave phosphorylated dinucleotides NADP(+), NADPH and NaADP(+). Also acts as an activator of ADP-ribosylation by supporting the catalytic activity of PARP16 and promoting mono-ADP-ribosylation of ribosomes by PARP16. May be involved in the maintenance of axonal integrity. The sequence is that of Nicotinamide/nicotinic acid mononucleotide adenylyltransferase 2 (NMNAT2) from Pongo abelii (Sumatran orangutan).